The primary structure comprises 102 residues: MIPGEVITPETDIELNVGRETLKVVVANLGDRPIQVGSHFHFYEANDALQFDREAVKGFRLNIAAGTAIRFEPGQSREVELVALAGKREVYGFAGRVMGKLD.

It belongs to the urease beta subunit family. In terms of assembly, heterotrimer of UreA (gamma), UreB (beta) and UreC (alpha) subunits. Three heterotrimers associate to form the active enzyme.

Its subcellular location is the cytoplasm. The catalysed reaction is urea + 2 H2O + H(+) = hydrogencarbonate + 2 NH4(+). The protein operates within nitrogen metabolism; urea degradation; CO(2) and NH(3) from urea (urease route): step 1/1. This Acinetobacter baumannii (strain ACICU) protein is Urease subunit beta.